Consider the following 821-residue polypeptide: Calpain-3 (821 aa).

A disordered region spans residues Met1 to Gly34. One can recognise a Calpain catalytic domain in the interval Leu73–Thr417. Active-site residues include Cys128, His334, and Asn358. A domain III region spans residues Ala418–Asn586. The segment at Thr587–Glu649 is linker. The tract at residues Ile603–Gln652 is disordered. The span at Gly624 to Lys638 shows a compositional bias: basic and acidic residues. A compositionally biased stretch (polar residues) spans Pro641–Gln652. EF-hand domains lie at Glu649 to Lys683, Phe692 to Lys725, Lys722 to His757, and Val787 to Ala821. The tract at residues Glu650 to Ala821 is domain IV. Ca(2+) contacts are provided by Ala662, Asp665, Glu667, Glu672, Asp705, Asp707, Ser709, Arg711, Glu716, Asp735, Asp737, Ser739, Thr741, Glu746, Asp800, Asp802, Asp804, and Ile806.

It belongs to the peptidase C2 family. Homodimer; via EF-hand domain 4. Interacts with TTN/titin. Interacts with CMYA5; this interaction, which results in CMYA5 proteolysis, may protect CAPN3 from autolysis. Interacts with SIMC1. Interacts with UTP25; the interaction is required for CAPN3 translocation to the nucleolus. Skeletal muscle.

The protein localises to the cytoplasm. It is found in the nucleus. Its subcellular location is the nucleolus. It catalyses the reaction Broad endopeptidase activity.. With respect to regulation, activated by micromolar concentrations of calcium and inhibited by calpastatin. Its function is as follows. Calcium-regulated non-lysosomal thiol-protease. Proteolytically cleaves CTBP1. Mediates, with UTP25, the proteasome-independent degradation of p53/TP53. The protein is Calpain-3 (CAPN3) of Sus scrofa (Pig).